We begin with the raw amino-acid sequence, 336 residues long: IgLON family member 5 (336 aa).

Residues 1–30 form the signal peptide; sequence MPPPAPGARLRLLAAAALAGLAVISRGLLS. Ig-like C2-type domains lie at 33–122, 132–217, and 218–307; these read LEFN…QPYT, PARI…VNYP, and PTIT…MRLL. N41, N49, N67, and N137 each carry an N-linked (GlcNAc...) asparagine glycan. C54 and C112 are oxidised to a cystine. 2 cysteine pairs are disulfide-bonded: C154-C195 and C238-C291. A glycan (N-linked (GlcNAc...) asparagine) is linked at N288.

It belongs to the immunoglobulin superfamily. IgLON family.

It localises to the secreted. This Homo sapiens (Human) protein is IgLON family member 5 (IGLON5).